A 104-amino-acid polypeptide reads, in one-letter code: uncharacterized protein (104 aa).

This is an uncharacterized protein from Escherichia coli (strain K12).